A 990-amino-acid polypeptide reads, in one-letter code: Mediator of RNA polymerase II transcription subunit 5 (990 aa).

The protein belongs to the Mediator complex subunit 5 family. Component of the Mediator complex.

The protein resides in the nucleus. Component of the Mediator complex, a coactivator involved in the regulated transcription of nearly all RNA polymerase II-dependent genes. Mediator functions as a bridge to convey information from gene-specific regulatory proteins to the basal RNA polymerase II transcription machinery. Mediator is recruited to promoters by direct interactions with regulatory proteins and serves as a scaffold for the assembly of a functional preinitiation complex with RNA polymerase II and the general transcription factors. This is Mediator of RNA polymerase II transcription subunit 5 (NUT1) from Debaryomyces hansenii (strain ATCC 36239 / CBS 767 / BCRC 21394 / JCM 1990 / NBRC 0083 / IGC 2968) (Yeast).